The primary structure comprises 264 residues: Zearalenone hydrolase (264 aa).

In terms of domain architecture, AB hydrolase-1 spans 27–207 (VLVPDGLGEC…KDLEALRGKP (181 aa)). Residues G32, S102, and S103 each coordinate zearalenone. S102 is an active-site residue. The active site involves E126. W183, Y187, S220, and H242 together coordinate zearalenone. H242 is a catalytic residue.

This sequence belongs to the AB hydrolase superfamily. Hydrolase RutD family. In terms of assembly, homodimer.

The catalysed reaction is zearalenone + H2O = hydrolyzed zearalenone + H(+). Its function is as follows. Lactonohydrolase that specifically hydrolyzes and deactivates the mycotoxin zearalenone (ZEN) and its zearalenol (ZOL) derivatives. ZHD101 prefers ZEN to ZOL as its substrate, but ZOL, especially the alpha-form, shows higher estrogenic toxicity than ZEN. This Bionectria ochroleuca (Gliocladium roseum) protein is Zearalenone hydrolase.